The primary structure comprises 35 residues: Augerpeptide hheTx4 (35 aa).

Contains 4 disulfide bonds. As to expression, expressed by the venom duct.

Its subcellular location is the secreted. This is Augerpeptide hheTx4 from Hastula hectica (Sea snail).